We begin with the raw amino-acid sequence, 276 residues long: MTRSDLAAAFDDGPALVSYVVAGDPTPAATAEYIDALVDGGTDVIELGLPFSEPVAEGTTIQNAIKRALDAGMTPDAYLDLVARIDADVPVVCMTYYNLLFQYGDRAGPAAFVSAAAEAGVSGFVVPDLPVDESGPLREACRAHGLDLVFVVAPTTTADRRERMLDLTTGFVYVQGRVGTTGAREEVSAATPDALAALQHTDIPKAVGFGVSSGEQAREITASGADGVIVGSAYVDTVADGVADDDPPSVVADRLRDLAAELKAGAARGVPEPEHK.

Active-site proton acceptor residues include glutamate 46 and glutamate 57.

The protein belongs to the TrpA family. As to quaternary structure, tetramer of two alpha and two beta chains.

It carries out the reaction (1S,2R)-1-C-(indol-3-yl)glycerol 3-phosphate + L-serine = D-glyceraldehyde 3-phosphate + L-tryptophan + H2O. It participates in amino-acid biosynthesis; L-tryptophan biosynthesis; L-tryptophan from chorismate: step 5/5. Its function is as follows. The alpha subunit is responsible for the aldol cleavage of indoleglycerol phosphate to indole and glyceraldehyde 3-phosphate. The sequence is that of Tryptophan synthase alpha chain from Halobacterium salinarum (strain ATCC 29341 / DSM 671 / R1).